We begin with the raw amino-acid sequence, 239 residues long: MRTLFIGDLHLSADRLDITQAFNRFLDTELDDADALYILGDLFEVWVGDDLAAPFALELARKLNQVSQRLPIYFIHGNRDFMLGKQFADVAGMQMLPEVTCLDLYGVNTVILHGDSLCTLDKAYQRFRKLRSFAFARWLYSCLPKKKRQAIANKIRSNSQSSNQQKSYVIMDVEPSAVDALFAQSHCKQMIHGHTHRPAIHEFTNGCKRIVVGDWYEQGSVLVVSSDGVDLKSLPFDAS.

Residues Asp8, His10, Asp41, Asn78, and His113 each contribute to the Mn(2+) site. A substrate-binding site is contributed by 78-79 (NR). Residues Asp121, Ser159, Asn163, Lys166, and His194 each contribute to the substrate site. His194 and His196 together coordinate Mn(2+).

It belongs to the LpxH family. It depends on Mn(2+) as a cofactor.

The protein localises to the cell inner membrane. The enzyme catalyses UDP-2-N,3-O-bis[(3R)-3-hydroxytetradecanoyl]-alpha-D-glucosamine + H2O = 2-N,3-O-bis[(3R)-3-hydroxytetradecanoyl]-alpha-D-glucosaminyl 1-phosphate + UMP + 2 H(+). It functions in the pathway glycolipid biosynthesis; lipid IV(A) biosynthesis; lipid IV(A) from (3R)-3-hydroxytetradecanoyl-[acyl-carrier-protein] and UDP-N-acetyl-alpha-D-glucosamine: step 4/6. In terms of biological role, hydrolyzes the pyrophosphate bond of UDP-2,3-diacylglucosamine to yield 2,3-diacylglucosamine 1-phosphate (lipid X) and UMP by catalyzing the attack of water at the alpha-P atom. Involved in the biosynthesis of lipid A, a phosphorylated glycolipid that anchors the lipopolysaccharide to the outer membrane of the cell. The chain is UDP-2,3-diacylglucosamine hydrolase from Shewanella sp. (strain ANA-3).